Reading from the N-terminus, the 766-residue chain is Flocculation suppression protein (766 aa).

Disordered stretches follow at residues 1 to 52, 129 to 181, 203 to 247, 547 to 619, and 657 to 766; these read MSEE…HGSK, HDHS…PTKI, KRRA…SSNS, KPVP…SISG, and SVTP…KVKM. Composition is skewed to low complexity over residues 8-19 and 134-147; these read SAPAPASTPAPA and NDANSGDDANTNDD. Residues 64-186 mediate DNA binding; sequence IFIHKLYQIL…NPTKIWEFKH (123 aa). A compositionally biased stretch (basic and acidic residues) spans 171–181; that stretch reads QEKEKSNPTKI. Residues 208–224 are compositionally biased toward low complexity; it reads SRNNSSINSRKNSSNQN. S220 carries the post-translational modification Phosphoserine. Positions 236-247 are enriched in polar residues; the sequence is SSIQDPSTSSNS. Residue S556 is modified to Phosphoserine. Residues 679 to 699 are compositionally biased toward polar residues; that stretch reads AVSSNLINSPMNVEHSSSLSQ. The segment covering 708-719 has biased composition (low complexity); sequence LPQPSLPTTSTT. S733 carries the post-translational modification Phosphoserine. Polar residues predominate over residues 738–750; the sequence is LLNQEDSSTSSAD.

In the N-terminal section; belongs to the HSF family.

It is found in the nucleus. Its function is as follows. Involved in cell surface assembly and regulation of the gene related to flocculation (asexual cell aggregation). Mutations in SFL1 causes constitutive cell aggregation. The polypeptide is Flocculation suppression protein (SFL1) (Saccharomyces cerevisiae (strain ATCC 204508 / S288c) (Baker's yeast)).